Consider the following 688-residue polypeptide: DNA-directed RNA polymerase subunit beta' (688 aa).

Cys-69, Cys-71, Cys-87, and Cys-90 together coordinate Zn(2+). Positions 489, 491, and 493 each coordinate Mg(2+).

This sequence belongs to the RNA polymerase beta' chain family. RpoC1 subfamily. As to quaternary structure, in plastids the minimal PEP RNA polymerase catalytic core is composed of four subunits: alpha, beta, beta', and beta''. When a (nuclear-encoded) sigma factor is associated with the core the holoenzyme is formed, which can initiate transcription. Mg(2+) serves as cofactor. Zn(2+) is required as a cofactor.

The protein resides in the plastid. It localises to the chloroplast. It catalyses the reaction RNA(n) + a ribonucleoside 5'-triphosphate = RNA(n+1) + diphosphate. In terms of biological role, DNA-dependent RNA polymerase catalyzes the transcription of DNA into RNA using the four ribonucleoside triphosphates as substrates. This Piper cenocladum (Ant piper) protein is DNA-directed RNA polymerase subunit beta'.